Consider the following 436-residue polypeptide: Transcriptional regulator STP3 (436 aa).

Positions glutamate 204 to glutamine 277 are disordered. Residues isoleucine 230–serine 265 are compositionally biased toward low complexity. Positions threonine 268–glutamine 277 are enriched in basic residues. Residues phenylalanine 315–histidine 337 form a C2H2-type zinc finger.

Post-translationally, activated by the amino acid-induced proteolytic removal of an N-terminal inhibitory domain.

The protein resides in the cell membrane. It localises to the nucleus. Its function is as follows. Transcription factor that activates genes required for degradation of extracellular protein and uptake of peptides such as the secreted aspartyl protease SAP2 or the oligopeptide transporter OPT1. Required for virulence. Synthesized as latent cytoplasmic precursor, which, upon a signal initiated by the plasma membrane SPS amino acid sensor system (including CSY1 and CSH3), becomes proteolytically activated and relocates to the nucleus, where it induces the expression of SPS-sensor-regulated genes. This is Transcriptional regulator STP3 (STP3) from Candida albicans (strain SC5314 / ATCC MYA-2876) (Yeast).